Reading from the N-terminus, the 209-residue chain is Dephospho-CoA kinase (209 aa).

In terms of domain architecture, DPCK spans 13-209 (RIGLTGGIAT…AIEKVVVAEN (197 aa)). 21-26 (ATGKST) is an ATP binding site.

It belongs to the CoaE family.

Its subcellular location is the cytoplasm. It carries out the reaction 3'-dephospho-CoA + ATP = ADP + CoA + H(+). Its pathway is cofactor biosynthesis; coenzyme A biosynthesis; CoA from (R)-pantothenate: step 5/5. Catalyzes the phosphorylation of the 3'-hydroxyl group of dephosphocoenzyme A to form coenzyme A. In Synechococcus elongatus (strain ATCC 33912 / PCC 7942 / FACHB-805) (Anacystis nidulans R2), this protein is Dephospho-CoA kinase.